A 162-amino-acid chain; its full sequence is Fibroblast growth factor 22 (162 aa).

Residues 1-22 form the signal peptide; sequence MRSRLWLGLAWLLLARAPGAPG.

Belongs to the heparin-binding growth factors family. Interacts with FGFR1 and FGFR2. Interacts with FGFBP1. As to expression, preferentially expressed in skin; low expression in brain. Expressed in the inner root sheath of the hair follicle.

It is found in the secreted. In terms of biological role, plays a role in the fasting response, glucose homeostasis, lipolysis and lipogenesis. Can stimulate cell proliferation (in vitro). May be involved in hair development. The protein is Fibroblast growth factor 22 (Fgf22) of Mus musculus (Mouse).